The following is a 491-amino-acid chain: Probable cytosol aminopeptidase (491 aa).

Mn(2+)-binding residues include Lys263 and Asp268. Lys275 is a catalytic residue. Mn(2+) is bound by residues Asp286, Asp345, and Glu347. Arg349 is a catalytic residue.

This sequence belongs to the peptidase M17 family. Mn(2+) is required as a cofactor.

Its subcellular location is the cytoplasm. It catalyses the reaction Release of an N-terminal amino acid, Xaa-|-Yaa-, in which Xaa is preferably Leu, but may be other amino acids including Pro although not Arg or Lys, and Yaa may be Pro. Amino acid amides and methyl esters are also readily hydrolyzed, but rates on arylamides are exceedingly low.. It carries out the reaction Release of an N-terminal amino acid, preferentially leucine, but not glutamic or aspartic acids.. In terms of biological role, presumably involved in the processing and regular turnover of intracellular proteins. Catalyzes the removal of unsubstituted N-terminal amino acids from various peptides. The chain is Probable cytosol aminopeptidase from Haemophilus influenzae (strain PittEE).